The following is a 473-amino-acid chain: Photosystem II CP43 reaction center protein (473 aa).

Positions 1–14 are excised as a propeptide; it reads MKTLYSLRRFYPVE. Thr-15 bears the N-acetylthreonine mark. At Thr-15 the chain carries Phosphothreonine. Helical transmembrane passes span 69 to 93, 134 to 155, 178 to 200, 255 to 275, and 291 to 312; these read LFEVAHFVPEKPMYEQGLILLPHLA, LIGPETLEESFPFFGYVWKDRN, KALYFGGIYDTWAPGGGDVRKIT, KPFAWARRAFVWSGEAYLSYS, and WFNNTAYPSEFYGPTGPEASQA. [CaMn4O5] cluster is bound at residue Glu-367. Residues 447–471 traverse the membrane as a helical segment; it reads RARAAAAGFEKGIDRDFEPVLSMTP.

Belongs to the PsbB/PsbC family. PsbC subfamily. In terms of assembly, PSII is composed of 1 copy each of membrane proteins PsbA, PsbB, PsbC, PsbD, PsbE, PsbF, PsbH, PsbI, PsbJ, PsbK, PsbL, PsbM, PsbT, PsbX, PsbY, PsbZ, Psb30/Ycf12, at least 3 peripheral proteins of the oxygen-evolving complex and a large number of cofactors. It forms dimeric complexes. Requires Binds multiple chlorophylls and provides some of the ligands for the Ca-4Mn-5O cluster of the oxygen-evolving complex. It may also provide a ligand for a Cl- that is required for oxygen evolution. PSII binds additional chlorophylls, carotenoids and specific lipids. as cofactor.

The protein localises to the plastid. The protein resides in the chloroplast thylakoid membrane. Functionally, one of the components of the core complex of photosystem II (PSII). It binds chlorophyll and helps catalyze the primary light-induced photochemical processes of PSII. PSII is a light-driven water:plastoquinone oxidoreductase, using light energy to abstract electrons from H(2)O, generating O(2) and a proton gradient subsequently used for ATP formation. The sequence is that of Photosystem II CP43 reaction center protein from Cryptomeria japonica (Japanese cedar).